The primary structure comprises 302 residues: ATP synthase gamma chain (302 aa).

It belongs to the ATPase gamma chain family. F-type ATPases have 2 components, CF(1) - the catalytic core - and CF(0) - the membrane proton channel. CF(1) has five subunits: alpha(3), beta(3), gamma(1), delta(1), epsilon(1). CF(0) has three main subunits: a, b and c.

It is found in the cell membrane. Produces ATP from ADP in the presence of a proton gradient across the membrane. The gamma chain is believed to be important in regulating ATPase activity and the flow of protons through the CF(0) complex. The chain is ATP synthase gamma chain from Enterococcus faecalis (strain ATCC 700802 / V583).